The primary structure comprises 361 residues: Single-stranded DNA-binding protein 2 (361 aa).

K6 bears the N6-acetyllysine mark. One can recognise a LisH domain in the interval 18 to 50 (AREKLALYVYEYLLHVGAQKSAQTFLSEIRWEK). Disordered regions lie at residues 147 to 171 (GGVP…HPNM) and 194 to 361 (GAMR…TMSV). Gly residues predominate over residues 204–219 (GGPGMPGMNMGPGGGR). A compositionally biased stretch (polar residues) spans 225-236 (TNANSIPYSSAS). A compositionally biased stretch (pro residues) spans 246–256 (GGGPPGTPIMP). Residues 289-299 (GSDGPMGGLGG) are compositionally biased toward gly residues. The span at 317–332 (ISKNSPNNMSLSNQPG) shows a compositional bias: polar residues. S321 bears the Phosphoserine mark. Phosphothreonine is present on T333. Residues 346–361 (NPFQSESYSPSMTMSV) show a composition bias toward polar residues.

As to expression, ubiquitous.

The protein localises to the nucleus. The chain is Single-stranded DNA-binding protein 2 (SSBP2) from Homo sapiens (Human).